We begin with the raw amino-acid sequence, 351 residues long: Holliday junction branch migration complex subunit RuvB (351 aa).

Residues 4-199 form a large ATPase domain (RuvB-L) region; it reads DNPQFNQWYE…FGIINSLQYY (196 aa). Residues leucine 38, arginine 39, glycine 80, lysine 83, threonine 84, threonine 85, 146-148, arginine 189, tyrosine 199, and arginine 236 each bind ATP; that span reads EDY. Threonine 84 contributes to the Mg(2+) binding site. A small ATPAse domain (RuvB-S) region spans residues 200-270; it reads TPEELQQIVV…IVTIGLDKLR (71 aa). Residues 273 to 351 are head domain (RuvB-H); the sequence is NRGLDETDHK…HLGHAYQRKL (79 aa). Positions 328 and 333 each coordinate DNA.

Belongs to the RuvB family. Homohexamer. Forms an RuvA(8)-RuvB(12)-Holliday junction (HJ) complex. HJ DNA is sandwiched between 2 RuvA tetramers; dsDNA enters through RuvA and exits via RuvB. An RuvB hexamer assembles on each DNA strand where it exits the tetramer. Each RuvB hexamer is contacted by two RuvA subunits (via domain III) on 2 adjacent RuvB subunits; this complex drives branch migration. In the full resolvosome a probable DNA-RuvA(4)-RuvB(12)-RuvC(2) complex forms which resolves the HJ.

Its subcellular location is the cytoplasm. The catalysed reaction is ATP + H2O = ADP + phosphate + H(+). In terms of biological role, the RuvA-RuvB-RuvC complex processes Holliday junction (HJ) DNA during genetic recombination and DNA repair, while the RuvA-RuvB complex plays an important role in the rescue of blocked DNA replication forks via replication fork reversal (RFR). RuvA specifically binds to HJ cruciform DNA, conferring on it an open structure. The RuvB hexamer acts as an ATP-dependent pump, pulling dsDNA into and through the RuvAB complex. RuvB forms 2 homohexamers on either side of HJ DNA bound by 1 or 2 RuvA tetramers; 4 subunits per hexamer contact DNA at a time. Coordinated motions by a converter formed by DNA-disengaged RuvB subunits stimulates ATP hydrolysis and nucleotide exchange. Immobilization of the converter enables RuvB to convert the ATP-contained energy into a lever motion, pulling 2 nucleotides of DNA out of the RuvA tetramer per ATP hydrolyzed, thus driving DNA branch migration. The RuvB motors rotate together with the DNA substrate, which together with the progressing nucleotide cycle form the mechanistic basis for DNA recombination by continuous HJ branch migration. Branch migration allows RuvC to scan DNA until it finds its consensus sequence, where it cleaves and resolves cruciform DNA. The polypeptide is Holliday junction branch migration complex subunit RuvB (Leuconostoc mesenteroides subsp. mesenteroides (strain ATCC 8293 / DSM 20343 / BCRC 11652 / CCM 1803 / JCM 6124 / NCDO 523 / NBRC 100496 / NCIMB 8023 / NCTC 12954 / NRRL B-1118 / 37Y)).